Here is a 249-residue protein sequence, read N- to C-terminus: Adenylate kinase (249 aa).

43–48 provides a ligand contact to ATP; sequence GAGKGT. An NMP region spans residues 63–92; that stretch reads ATGDMLRAQVAAKTALGVEAKKIMDQGGLV. AMP is bound by residues Thr-64, Arg-69, 90–92, 119–122, and Gln-126; these read GLV and GFPR. An LID region spans residues 160 to 197; it reads GRLVHPASGRSYHKLFNPPKKDMTDDVTGEPLVQRSDD. ATP-binding positions include Arg-161 and 170–171; that span reads SY. The interval 177-197 is disordered; sequence PPKKDMTDDVTGEPLVQRSDD. 2 residues coordinate AMP: Arg-194 and Arg-205. ATP is bound at residue Gln-233.

It belongs to the adenylate kinase family. AK2 subfamily. As to quaternary structure, monomer.

The protein resides in the cytoplasm. Its subcellular location is the cytosol. It is found in the mitochondrion intermembrane space. The catalysed reaction is AMP + ATP = 2 ADP. Functionally, catalyzes the reversible transfer of the terminal phosphate group between ATP and AMP. Plays an important role in cellular energy homeostasis and in adenine nucleotide metabolism. Adenylate kinase activity is critical for regulation of the phosphate utilization and the AMP de novo biosynthesis pathways. In Candida albicans (strain SC5314 / ATCC MYA-2876) (Yeast), this protein is Adenylate kinase.